We begin with the raw amino-acid sequence, 191 residues long: Molybdenum cofactor guanylyltransferase (191 aa).

Residues 11 to 13 (LCG), K23, D66, and D97 each bind GTP. D97 contacts Mg(2+).

This sequence belongs to the MobA family. Monomer. Requires Mg(2+) as cofactor.

It is found in the cytoplasm. It catalyses the reaction Mo-molybdopterin + GTP + H(+) = Mo-molybdopterin guanine dinucleotide + diphosphate. In terms of biological role, transfers a GMP moiety from GTP to Mo-molybdopterin (Mo-MPT) cofactor (Moco or molybdenum cofactor) to form Mo-molybdopterin guanine dinucleotide (Mo-MGD) cofactor. The sequence is that of Molybdenum cofactor guanylyltransferase from Campylobacter jejuni subsp. doylei (strain ATCC BAA-1458 / RM4099 / 269.97).